A 48-amino-acid chain; its full sequence is Large ribosomal subunit protein bL34c (48 aa).

Belongs to the bacterial ribosomal protein bL34 family.

The protein resides in the plastid. Its subcellular location is the chloroplast. The sequence is that of Large ribosomal subunit protein bL34c from Thalassiosira pseudonana (Marine diatom).